A 565-amino-acid polypeptide reads, in one-letter code: Thiol:disulfide interchange protein DsbD (565 aa).

Residues 1 to 19 form the signal peptide; sequence MAQRIFTLILLLCSTSVFA. Cystine bridges form between Cys-122-Cys-128 and Cys-182-Cys-304. 7 helical membrane-spanning segments follow: residues 163-183, 208-228, 243-263, 296-316, 323-343, 357-377, and 384-404; these read LPFS…TPCV, LLTF…GLVV, YVLI…FGLF, IAGL…LLYI, WLGG…LMLI, WMEQ…VFLL, and VWGL…AFIT. Residues 434–565 form the Thioredoxin domain; sequence WAFGATHTAQ…FSAHLRDRQP (132 aa). An intrachain disulfide couples Cys-480 to Cys-483.

The protein belongs to the thioredoxin family. DsbD subfamily.

Its subcellular location is the cell inner membrane. It catalyses the reaction [protein]-dithiol + NAD(+) = [protein]-disulfide + NADH + H(+). It carries out the reaction [protein]-dithiol + NADP(+) = [protein]-disulfide + NADPH + H(+). In terms of biological role, required to facilitate the formation of correct disulfide bonds in some periplasmic proteins and for the assembly of the periplasmic c-type cytochromes. Acts by transferring electrons from cytoplasmic thioredoxin to the periplasm. This transfer involves a cascade of disulfide bond formation and reduction steps. This is Thiol:disulfide interchange protein DsbD from Shigella boydii serotype 4 (strain Sb227).